The primary structure comprises 258 residues: Glucose 1-dehydrogenase 2 (258 aa).

11-35 (IVTGSSKGIGKAIAERFGKEKMNVV) provides a ligand contact to NADP(+). Residue Ser-146 coordinates substrate. The Proton acceptor role is filled by Tyr-159.

Belongs to the short-chain dehydrogenases/reductases (SDR) family. As to quaternary structure, homotetramer.

It catalyses the reaction D-glucose + NAD(+) = D-glucono-1,5-lactone + NADH + H(+). The catalysed reaction is D-glucose + NADP(+) = D-glucono-1,5-lactone + NADPH + H(+). This Bacillus subtilis (strain 168) protein is Glucose 1-dehydrogenase 2 (ycdF).